A 275-amino-acid polypeptide reads, in one-letter code: Autophagy-related protein 5 (275 aa).

Residue K129 forms a Glycyl lysine isopeptide (Lys-Gly) (interchain with G-Cter in lgg-3/ATG12) linkage. Low complexity predominate over residues 221–231 (LSSSSSSSTDS). The disordered stretch occupies residues 221 to 241 (LSSSSSSSTDSQSEHPPRLIS).

Belongs to the ATG5 family. As to quaternary structure, most likely a component of a complex at least containing atg-5, lgg-3/ATG12, atg-16.1 and/or atg-16.2. Interacts with lgg-3/ATG12. Interacts with atg-16.1 (via N-terminus) and atg-16.2 (via N-terminus). In terms of processing, conjugated to lgg-3/ATG12; which is essential for autophagy.

Its subcellular location is the preautophagosomal structure membrane. Functionally, involved in autophagic vesicle formation. Conjugation with lgg-3/ATG12, through a ubiquitin-like conjugating system involving atg-7 as an E1-like activating enzyme and atg-10 as an E2-like conjugating enzyme, is essential for its function. Most likely a component of an atg-5-lgg-3-atg-16 complex that promotes autophagosome formation by associating with lgg-2, but not lgg-1, at the preautophagosomal membrane. Probably, as part of an atg-5-lgg-3-atg-16 complex, required for lgg-1 lipidation; the complex acts as an E3-like enzyme promoting atg-3-mediated lgg-1 lipidation. Furthermore, association with atg-16.2 is required for the nucleation of lgg-1 positive autophagic vesicles. This is Autophagy-related protein 5 from Caenorhabditis elegans.